A 234-amino-acid polypeptide reads, in one-letter code: Small ribosomal subunit protein uS3 (234 aa).

Residues Val-17–Gln-86 form the KH type-2 domain.

This sequence belongs to the universal ribosomal protein uS3 family. As to quaternary structure, part of the 30S ribosomal subunit.

In terms of biological role, binds the lower part of the 30S subunit head. This Methanoculleus marisnigri (strain ATCC 35101 / DSM 1498 / JR1) protein is Small ribosomal subunit protein uS3.